A 64-amino-acid polypeptide reads, in one-letter code: MPKAKTHSGASKRFRTTGSGKVVRQKANRRHLLEHKPTKRTRRLDGRTVVAANDVKRVKKLLNG.

Basic residues-rich tracts occupy residues Met-1–Arg-15 and Val-23–Arg-42. A disordered region spans residues Met-1–Asp-45.

It belongs to the bacterial ribosomal protein bL35 family.

This is Large ribosomal subunit protein bL35 from Mycolicibacterium vanbaalenii (strain DSM 7251 / JCM 13017 / BCRC 16820 / KCTC 9966 / NRRL B-24157 / PYR-1) (Mycobacterium vanbaalenii).